Here is a 304-residue protein sequence, read N- to C-terminus: Ribokinase (304 aa).

Substrate is bound by residues 12–14, 41–45, and glutamate 142; these read NVD and GKGAN. Residues asparagine 186 and 222-227 each bind ATP; that span reads TLGKQG. K(+) contacts are provided by aspartate 248 and threonine 250. ATP contacts are provided by residues 253-254 and asparagine 279; that span reads GD. Residue aspartate 254 participates in substrate binding. The Proton acceptor role is filled by aspartate 254. The K(+) site is built by threonine 285, lysine 288, glycine 290, and serine 294.

Belongs to the carbohydrate kinase PfkB family. Ribokinase subfamily. As to quaternary structure, homodimer. The cofactor is Mg(2+).

Its subcellular location is the cytoplasm. The catalysed reaction is D-ribose + ATP = D-ribose 5-phosphate + ADP + H(+). It participates in carbohydrate metabolism; D-ribose degradation; D-ribose 5-phosphate from beta-D-ribopyranose: step 2/2. Activated by a monovalent cation that binds near, but not in, the active site. The most likely occupant of the site in vivo is potassium. Ion binding induces a conformational change that may alter substrate affinity. Functionally, catalyzes the phosphorylation of ribose at O-5 in a reaction requiring ATP and magnesium. The resulting D-ribose-5-phosphate can then be used either for sythesis of nucleotides, histidine, and tryptophan, or as a component of the pentose phosphate pathway. In Staphylococcus aureus (strain COL), this protein is Ribokinase.